The sequence spans 480 residues: Ribosome assembly protein rrb1 (480 aa).

Disordered regions lie at residues 1-78 (MSKR…WLPG) and 155-176 (QHDE…ILEH). 2 stretches are compositionally biased toward acidic residues: residues 28-52 (VDTE…YIEA) and 158-172 (ENDD…EEDP). Ser163 and Ser166 each carry phosphoserine. WD repeat units follow at residues 183 to 225 (GACN…RSLD), 289 to 329 (SHTA…KTSA), 334 to 375 (AHPG…SSSS), 385 to 425 (WHRA…DEEE), and 446 to 480 (MGQQ…TITF).

Associates with ribosomal protein L3.

Its subcellular location is the cytoplasm. The protein resides in the nucleus. It is found in the nucleolus. Involved in regulation of L3 expression and stability and plays a role in early 60S ribosomal subunit assembly. May be required for proper assembly of pre-ribosomal particles during early ribosome biogenesis, presumably by targeting L3 onto the 35S precursor rRNA. In Schizosaccharomyces pombe (strain 972 / ATCC 24843) (Fission yeast), this protein is Ribosome assembly protein rrb1 (rrb1).